Here is a 1132-residue protein sequence, read N- to C-terminus: Tyrosine-protein kinase JAK2 (1132 aa).

Residues 1-239 (MGMACLTMTE…RYRFRRFIQQ (239 aa)) are interaction with cytokine/interferon/growth hormone receptors. Positions 37-380 (PVLQVYLYHS…GYYRLTADAH (344 aa)) constitute an FERM domain. The residue at position 119 (tyrosine 119) is a Phosphotyrosine; by autocatalysis. Phosphotyrosine is present on residues tyrosine 372 and tyrosine 373. One can recognise an SH2; atypical domain in the interval 401–482 (HGPISMDFAI…NLKDLLNCYQ (82 aa)). Serine 523 carries the post-translational modification Phosphoserine. Residues 545-809 (LIFNESLGQG…AVIRDLNSLF (265 aa)) enclose the Protein kinase 1 domain. Phosphotyrosine occurs at positions 570 and 813. The Protein kinase 2 domain maps to 849-1124 (LKFLQQLGKG…SFRDLSLRVD (276 aa)). 855–863 (LGKGNFGSV) contacts ATP. Position 868 is a phosphotyrosine; by autocatalysis (tyrosine 868). Residue lysine 882 coordinates ATP. Phosphotyrosine; by autocatalysis occurs at positions 966 and 972. The active-site Proton acceptor is aspartate 976. 2 positions are modified to phosphotyrosine; by autocatalysis: tyrosine 1007 and tyrosine 1008.

This sequence belongs to the protein kinase superfamily. Tyr protein kinase family. JAK subfamily. In terms of assembly, interacts with IL23R, SKB1 and STAM2. Interacts with EPOR. Interacts with LYN. Interacts with SIRPA. Interacts with SH2B1. Interacts with TEC. Interacts with IFNGR2 (via intracellular domain). Interacts with LEPR (Isoform B). Interacts with HSP90AB1; promotes functional activation in a heat shock-dependent manner. Interacts with STRA6. Interacts with ASB2; the interaction targets JAK2 for Notch-induced proteasomal degradation. Interacts with MPL/TPOR. It depends on Mg(2+) as a cofactor. In terms of processing, autophosphorylated, leading to regulate its activity. Leptin promotes phosphorylation on tyrosine residues, including phosphorylation on Tyr-813. Autophosphorylation on Tyr-119 in response to EPO down-regulates its kinase activity. Autophosphorylation on Tyr-868, Tyr-966 and Tyr-972 in response to growth hormone (GH) are required for maximal kinase activity. Also phosphorylated by TEC. Phosphorylated on tyrosine residues in response to interferon gamma signaling. Phosphorylated on tyrosine residues in response to a signaling cascade that is activated by increased cellular retinol. Post-translationally, undergoes Notch-induced ubiquitination and subsequent proteasomal degradation which is mediated by ASB1 or ASB2, the substrate-recognition components of probable ECS E3 ubiquitin-protein ligase complexes. Ubiquitously expressed throughout most tissues.

Its subcellular location is the endomembrane system. The protein resides in the cytoplasm. It is found in the nucleus. It catalyses the reaction L-tyrosyl-[protein] + ATP = O-phospho-L-tyrosyl-[protein] + ADP + H(+). Its activity is regulated as follows. Regulated by autophosphorylation, can both activate or decrease activity. Heme regulates its activity by enhancing the phosphorylation on Tyr-1007 and Tyr-1008. Its function is as follows. Non-receptor tyrosine kinase involved in various processes such as cell growth, development, differentiation or histone modifications. Mediates essential signaling events in both innate and adaptive immunity. In the cytoplasm, plays a pivotal role in signal transduction via its association with type I receptors such as growth hormone (GHR), prolactin (PRLR), leptin (LEPR), erythropoietin (EPOR), thrombopoietin receptor (MPL/TPOR); or type II receptors including IFN-alpha, IFN-beta, IFN-gamma and multiple interleukins. Following ligand-binding to cell surface receptors, phosphorylates specific tyrosine residues on the cytoplasmic tails of the receptor, creating docking sites for STATs proteins. Subsequently, phosphorylates the STATs proteins once they are recruited to the receptor. Phosphorylated STATs then form homodimer or heterodimers and translocate to the nucleus to activate gene transcription. For example, cell stimulation with erythropoietin (EPO) during erythropoiesis leads to JAK2 autophosphorylation, activation, and its association with erythropoietin receptor (EPOR) that becomes phosphorylated in its cytoplasmic domain. Then, STAT5 (STAT5A or STAT5B) is recruited, phosphorylated and activated by JAK2. Once activated, dimerized STAT5 translocates into the nucleus and promotes the transcription of several essential genes involved in the modulation of erythropoiesis. Part of a signaling cascade that is activated by increased cellular retinol and that leads to the activation of STAT5 (STAT5A or STAT5B). In addition, JAK2 mediates angiotensin-2-induced ARHGEF1 phosphorylation. Plays a role in cell cycle by phosphorylating CDKN1B. Cooperates with TEC through reciprocal phosphorylation to mediate cytokine-driven activation of FOS transcription. In the nucleus, plays a key role in chromatin by specifically mediating phosphorylation of 'Tyr-41' of histone H3 (H3Y41ph), a specific tag that promotes exclusion of CBX5 (HP1 alpha) from chromatin. Up-regulates the potassium voltage-gated channel activity of KCNA3. The polypeptide is Tyrosine-protein kinase JAK2 (Mus musculus (Mouse)).